The chain runs to 586 residues: A-type ATP synthase subunit A (586 aa).

Glycine 232–threonine 239 is a binding site for ATP.

The protein belongs to the ATPase alpha/beta chains family. Has multiple subunits with at least A(3), B(3), C, D, E, F, H, I and proteolipid K(x).

The protein resides in the cell membrane. It carries out the reaction ATP + H2O + 4 H(+)(in) = ADP + phosphate + 5 H(+)(out). In terms of biological role, component of the A-type ATP synthase that produces ATP from ADP in the presence of a proton gradient across the membrane. The A chain is the catalytic subunit. The polypeptide is A-type ATP synthase subunit A (Methanococcus maripaludis (strain C7 / ATCC BAA-1331)).